We begin with the raw amino-acid sequence, 268 residues long: 5'-nucleotidase SurE (268 aa).

4 residues coordinate a divalent metal cation: Asp24, Asp25, Ser55, and Asn111.

It belongs to the SurE nucleotidase family. Requires a divalent metal cation as cofactor.

The protein localises to the cytoplasm. It carries out the reaction a ribonucleoside 5'-phosphate + H2O = a ribonucleoside + phosphate. In terms of biological role, nucleotidase that shows phosphatase activity on nucleoside 5'-monophosphates. This chain is 5'-nucleotidase SurE, found in Deinococcus radiodurans (strain ATCC 13939 / DSM 20539 / JCM 16871 / CCUG 27074 / LMG 4051 / NBRC 15346 / NCIMB 9279 / VKM B-1422 / R1).